The sequence spans 396 residues: Elongation factor Tu (396 aa).

The tr-type G domain maps to 10-205 (KPHVNIGTIG…ACDDNIPDPV (196 aa)). Residues 19 to 26 (GHVDHGKT) form a G1 region. 19 to 26 (GHVDHGKT) contributes to the GTP binding site. T26 is a Mg(2+) binding site. The segment at 62-66 (GITIN) is G2. Residues 83–86 (DAPG) are G3. Residues 83–87 (DAPGH) and 138–141 (NKCD) each bind GTP. The interval 138-141 (NKCD) is G4. The segment at 175 to 177 (SAL) is G5.

Belongs to the TRAFAC class translation factor GTPase superfamily. Classic translation factor GTPase family. EF-Tu/EF-1A subfamily. As to quaternary structure, monomer.

Its subcellular location is the cytoplasm. It catalyses the reaction GTP + H2O = GDP + phosphate + H(+). GTP hydrolase that promotes the GTP-dependent binding of aminoacyl-tRNA to the A-site of ribosomes during protein biosynthesis. The protein is Elongation factor Tu of Corynebacterium glutamicum (strain ATCC 13032 / DSM 20300 / JCM 1318 / BCRC 11384 / CCUG 27702 / LMG 3730 / NBRC 12168 / NCIMB 10025 / NRRL B-2784 / 534).